A 181-amino-acid polypeptide reads, in one-letter code: Large ribosomal subunit protein uL5 (181 aa).

Belongs to the universal ribosomal protein uL5 family. In terms of assembly, part of the 50S ribosomal subunit; contacts the 5S rRNA and probably tRNA. Forms a bridge to the 30S subunit in the 70S ribosome.

In terms of biological role, this is one of the proteins that bind and probably mediate the attachment of the 5S RNA into the large ribosomal subunit, where it forms part of the central protuberance. In the 70S ribosome it contacts protein S13 of the 30S subunit (bridge B1b), connecting the 2 subunits; this bridge is implicated in subunit movement. May contact the P site tRNA; the 5S rRNA and some of its associated proteins might help stabilize positioning of ribosome-bound tRNAs. The polypeptide is Large ribosomal subunit protein uL5 (Methanococcus maripaludis (strain C7 / ATCC BAA-1331)).